The sequence spans 584 residues: DNA mismatch repair protein MutL (584 aa).

It belongs to the DNA mismatch repair MutL/HexB family.

Its function is as follows. This protein is involved in the repair of mismatches in DNA. It is required for dam-dependent methyl-directed DNA mismatch repair. May act as a 'molecular matchmaker', a protein that promotes the formation of a stable complex between two or more DNA-binding proteins in an ATP-dependent manner without itself being part of a final effector complex. This Syntrophomonas wolfei subsp. wolfei (strain DSM 2245B / Goettingen) protein is DNA mismatch repair protein MutL.